The primary structure comprises 65 residues: MPKMKTKSSAKKRFKFLGNGKVKRTHSHLRHILTKKTTKQKRNLRGTAIISSTDVKRVRAMMPTQ.

This sequence belongs to the bacterial ribosomal protein bL35 family.

The sequence is that of Large ribosomal subunit protein bL35 from Methylobacillus flagellatus (strain ATCC 51484 / DSM 6875 / VKM B-1610 / KT).